The following is a 769-amino-acid chain: Serine protease HtrA-like (769 aa).

Basic residues predominate over residues 1–20 (MDIGKKHVIPKSQYRRKRRE). Positions 1–390 (MDIGKKHVIP…ATSKLNKGRA (390 aa)) are disordered. Composition is skewed to basic and acidic residues over residues 21–64 (FFHN…ERFK) and 71–108 (LEQRNRDVNENKAEESKSNQDSKSAYNRDHYLTDDVSK). Positions 126–137 (YEQNSEATLSTK) are enriched in polar residues. The span at 138–186 (STDKVESTEMRKLSSDKNKVGHEEQHVLSKPSEHDKETRIDSESSRTDS) shows a compositional bias: basic and acidic residues. Positions 247–262 (QQSQNEQTKTYTYGDS) are enriched in polar residues. Composition is skewed to basic and acidic residues over residues 264–296 (QNDKSNHENDLSHHIPSISDDKDNVMRENHIVD) and 310–330 (KTDDDRKLDEKIHVEDKHKQN). The span at 331–347 (ADSSETVGYQSQSTASH) shows a compositional bias: polar residues. Residues 348 to 364 (RSTEKRNISINDHDKLN) are compositionally biased toward basic and acidic residues. A compositionally biased stretch (polar residues) spans 365–390 (GQKTNTKTSANNNQKKATSKLNKGRA). Residues 410–430 (LVILMGIIILIVILNAIFNNV) form a helical membrane-spanning segment. Residues His504, Asp534, and Ser619 each act as charge relay system in the active site. The 54-residue stretch at 680 to 733 (IVSLNSFERQAVKLPGKVKNGVVVDQVDNNGLADQSGLKKGDVITELDGKLLED) folds into the PDZ domain.

The protein belongs to the peptidase S1C family.

It localises to the cell membrane. In Staphylococcus aureus (strain NCTC 8325 / PS 47), this protein is Serine protease HtrA-like.